Reading from the N-terminus, the 418-residue chain is Endoglucanase EG-II (418 aa).

A signal peptide spans 1–21 (MNKSVAPLLLAASILYGGAVA). Pyrrolidone carboxylic acid is present on glutamine 22. One can recognise a CBM1 domain in the interval 22–57 (QQTVWGQCGGIGWSGPTNCAPGSACSTLNPYYAQCI). Positions 58–91 (PGATTITTSTRPPSGPTTTTRATSTSSSTPPTSS) are linker. Positions 63–91 (ITTSTRPPSGPTTTTRATSTSSSTPPTSS) are disordered. The catalytic stretch occupies residues 92–418 (GVRFAGVNIA…SLVSSCLARK (327 aa)). A disulfide bond links cysteine 107 and cysteine 113. A glycan (N-linked (GlcNAc) asparagine) is linked at asparagine 124. Residues cysteine 183 and cysteine 190 are joined by a disulfide bond. The active-site Proton donor/acceptor is glutamate 239. Disulfide bonds link cysteine 323/cysteine 359 and cysteine 364/cysteine 414. The active-site Nucleophile is the glutamate 350.

This sequence belongs to the glycosyl hydrolase 5 (cellulase A) family.

It localises to the secreted. The enzyme catalyses Endohydrolysis of (1-&gt;4)-beta-D-glucosidic linkages in cellulose, lichenin and cereal beta-D-glucans.. Functionally, endoglucanase (EG) that cleaves the internal beta-1,4-glucosidic bonds in cellulose. The degradation of cellulose involves an interplay between different cellulolytic enzymes. Hydrolysis starts with EGs, which cut internal glycosidic linkages to reduce the polymerization degree of the substrate and creates new chain ends for exocellobiohydrolases (CBHs). The CBH release the disaccharide cellobiose from the non-reducing end of the cellulose polymer chain. Finally, beta-1,4-glucosidases hydrolyze the cellobiose and other short cello-oligosaccharides into glucose units. In Hypocrea jecorina (Trichoderma reesei), this protein is Endoglucanase EG-II (egl2).